Reading from the N-terminus, the 91-residue chain is ATP-dependent Clp protease adapter protein ClpS (91 aa).

It belongs to the ClpS family. Binds to the N-terminal domain of the chaperone ClpA.

Involved in the modulation of the specificity of the ClpAP-mediated ATP-dependent protein degradation. The chain is ATP-dependent Clp protease adapter protein ClpS from Helicobacter pylori (strain ATCC 700392 / 26695) (Campylobacter pylori).